Consider the following 355-residue polypeptide: Holliday junction branch migration complex subunit RuvB (355 aa).

The interval 4-190 is large ATPase domain (RuvB-L); sequence TDKLAAERII…FGIVARLEFY (187 aa). ATP is bound by residues leucine 29, arginine 30, glycine 71, lysine 74, threonine 75, threonine 76, 137–139, arginine 180, tyrosine 190, and arginine 227; that span reads EDY. Threonine 75 lines the Mg(2+) pocket. The interval 191–261 is small ATPAse domain (RuvB-S); the sequence is NAEQLARIVT…VADAALKMLD (71 aa). Residues 264 to 355 are head domain (RuvB-H); the sequence is AVGFDLMDRK…LPGLWDSAAT (92 aa). The DNA site is built by arginine 300, arginine 319, and arginine 324.

It belongs to the RuvB family. Homohexamer. Forms an RuvA(8)-RuvB(12)-Holliday junction (HJ) complex. HJ DNA is sandwiched between 2 RuvA tetramers; dsDNA enters through RuvA and exits via RuvB. An RuvB hexamer assembles on each DNA strand where it exits the tetramer. Each RuvB hexamer is contacted by two RuvA subunits (via domain III) on 2 adjacent RuvB subunits; this complex drives branch migration. In the full resolvosome a probable DNA-RuvA(4)-RuvB(12)-RuvC(2) complex forms which resolves the HJ.

The protein resides in the cytoplasm. It catalyses the reaction ATP + H2O = ADP + phosphate + H(+). The RuvA-RuvB-RuvC complex processes Holliday junction (HJ) DNA during genetic recombination and DNA repair, while the RuvA-RuvB complex plays an important role in the rescue of blocked DNA replication forks via replication fork reversal (RFR). RuvA specifically binds to HJ cruciform DNA, conferring on it an open structure. The RuvB hexamer acts as an ATP-dependent pump, pulling dsDNA into and through the RuvAB complex. RuvB forms 2 homohexamers on either side of HJ DNA bound by 1 or 2 RuvA tetramers; 4 subunits per hexamer contact DNA at a time. Coordinated motions by a converter formed by DNA-disengaged RuvB subunits stimulates ATP hydrolysis and nucleotide exchange. Immobilization of the converter enables RuvB to convert the ATP-contained energy into a lever motion, pulling 2 nucleotides of DNA out of the RuvA tetramer per ATP hydrolyzed, thus driving DNA branch migration. The RuvB motors rotate together with the DNA substrate, which together with the progressing nucleotide cycle form the mechanistic basis for DNA recombination by continuous HJ branch migration. Branch migration allows RuvC to scan DNA until it finds its consensus sequence, where it cleaves and resolves cruciform DNA. This chain is Holliday junction branch migration complex subunit RuvB, found in Paraburkholderia xenovorans (strain LB400).